The following is a 146-amino-acid chain: Peptidyl-lysine N-acetyltransferase YiaC (146 aa).

The N-acetyltransferase domain maps to 1 to 143 (MIREAQRSEL…PTWIMSWPVV (143 aa)).

It belongs to the acetyltransferase family.

The enzyme catalyses L-lysyl-[protein] + acetyl-CoA = N(6)-acetyl-L-lysyl-[protein] + CoA + H(+). N-epsilon-lysine acetyltransferase that catalyzes acetylation of a large number of proteins. Overexpression inhibits motility. This chain is Peptidyl-lysine N-acetyltransferase YiaC (yiaC), found in Escherichia coli (strain K12).